The following is a 142-amino-acid chain: ATP synthase subunit b' (142 aa).

The chain crosses the membrane as a helical span at residues 7-27; sequence TLPLMMFQFFLLVAVLNAVFF.

The protein belongs to the ATPase B chain family. In terms of assembly, F-type ATPases have 2 components, F(1) - the catalytic core - and F(0) - the membrane proton channel. F(1) has five subunits: alpha(3), beta(3), gamma(1), delta(1), epsilon(1). F(0) has four main subunits: a(1), b(1), b'(1) and c(10-14). The alpha and beta chains form an alternating ring which encloses part of the gamma chain. F(1) is attached to F(0) by a central stalk formed by the gamma and epsilon chains, while a peripheral stalk is formed by the delta, b and b' chains.

Its subcellular location is the cellular thylakoid membrane. F(1)F(0) ATP synthase produces ATP from ADP in the presence of a proton or sodium gradient. F-type ATPases consist of two structural domains, F(1) containing the extramembraneous catalytic core and F(0) containing the membrane proton channel, linked together by a central stalk and a peripheral stalk. During catalysis, ATP synthesis in the catalytic domain of F(1) is coupled via a rotary mechanism of the central stalk subunits to proton translocation. Its function is as follows. Component of the F(0) channel, it forms part of the peripheral stalk, linking F(1) to F(0). The b'-subunit is a diverged and duplicated form of b found in plants and photosynthetic bacteria. The polypeptide is ATP synthase subunit b' (Acaryochloris marina (strain MBIC 11017)).